The chain runs to 38 residues: Photosystem II reaction center protein L (38 aa).

A helical transmembrane segment spans residues 17 to 37; sequence SLYWGLLLMFVLAVLFSSYFF.

This sequence belongs to the PsbL family. PSII is composed of 1 copy each of membrane proteins PsbA, PsbB, PsbC, PsbD, PsbE, PsbF, PsbH, PsbI, PsbJ, PsbK, PsbL, PsbM, PsbT, PsbX, PsbY, PsbZ, Psb30/Ycf12, at least 3 peripheral proteins of the oxygen-evolving complex and a large number of cofactors. It forms dimeric complexes.

It localises to the plastid. The protein resides in the chloroplast thylakoid membrane. One of the components of the core complex of photosystem II (PSII). PSII is a light-driven water:plastoquinone oxidoreductase that uses light energy to abstract electrons from H(2)O, generating O(2) and a proton gradient subsequently used for ATP formation. It consists of a core antenna complex that captures photons, and an electron transfer chain that converts photonic excitation into a charge separation. This subunit is found at the monomer-monomer interface and is required for correct PSII assembly and/or dimerization. The chain is Photosystem II reaction center protein L from Emiliania huxleyi (Coccolithophore).